A 380-amino-acid polypeptide reads, in one-letter code: Succinyl-diaminopimelate desuccinylase (380 aa).

A Zn(2+)-binding site is contributed by histidine 69. Aspartate 71 is a catalytic residue. Aspartate 102 contributes to the Zn(2+) binding site. Catalysis depends on glutamate 135, which acts as the Proton acceptor. Residues glutamate 136, glutamate 164, and histidine 353 each coordinate Zn(2+).

It belongs to the peptidase M20A family. DapE subfamily. Homodimer. It depends on Zn(2+) as a cofactor. Requires Co(2+) as cofactor.

The enzyme catalyses N-succinyl-(2S,6S)-2,6-diaminopimelate + H2O = (2S,6S)-2,6-diaminopimelate + succinate. It functions in the pathway amino-acid biosynthesis; L-lysine biosynthesis via DAP pathway; LL-2,6-diaminopimelate from (S)-tetrahydrodipicolinate (succinylase route): step 3/3. Its function is as follows. Catalyzes the hydrolysis of N-succinyl-L,L-diaminopimelic acid (SDAP), forming succinate and LL-2,6-diaminopimelate (DAP), an intermediate involved in the bacterial biosynthesis of lysine and meso-diaminopimelic acid, an essential component of bacterial cell walls. The sequence is that of Succinyl-diaminopimelate desuccinylase from Cereibacter sphaeroides (strain ATCC 17025 / ATH 2.4.3) (Rhodobacter sphaeroides).